We begin with the raw amino-acid sequence, 46 residues long: Protein PsbN (46 aa).

Residues 7–27 (ALSVALGVMAVVLGLTGFGVY) traverse the membrane as a helical segment.

This sequence belongs to the PsbN family.

It localises to the cellular thylakoid membrane. Functionally, may play a role in photosystem I and II biogenesis. This is Protein PsbN from Synechococcus sp. (strain CC9902).